The following is a 425-amino-acid chain: tRNA(Met) cytidine acetate ligase (425 aa).

ATP-binding positions include 7-20 (VVEY…HLHH), Gly102, Asn162, and 187-188 (RI).

Belongs to the TmcAL family.

It localises to the cytoplasm. The catalysed reaction is cytidine(34) in elongator tRNA(Met) + acetate + ATP = N(4)-acetylcytidine(34) in elongator tRNA(Met) + AMP + diphosphate. In terms of biological role, catalyzes the formation of N(4)-acetylcytidine (ac(4)C) at the wobble position of elongator tRNA(Met), using acetate and ATP as substrates. First activates an acetate ion to form acetyladenylate (Ac-AMP) and then transfers the acetyl group to tRNA to form ac(4)C34. This chain is tRNA(Met) cytidine acetate ligase, found in Fervidobacterium nodosum (strain ATCC 35602 / DSM 5306 / Rt17-B1).